The sequence spans 282 residues: Anamorsin homolog (282 aa).

An N-terminal SAM-like domain region spans residues 1 to 140 (MADLQGKAVL…KPVYEVGAAA (140 aa)). Residues 141 to 192 (PLKLSFAKKKQSGAAAPAAQVAEVWTIATDDFDDDDLLENDGDELLDAEDLA) are linker. [2Fe-2S] cluster-binding residues include Cys203, Cys214, Cys217, and Cys219. Residues 203–219 (CEVGAGGKRRACKNCTC) are fe-S binding site A. 4 residues coordinate [4Fe-4S] cluster: Cys243, Cys246, Cys254, and Cys257. Short sequence motifs (cx2C motif) lie at residues 243-246 (CGNC) and 254-257 (CASC). The segment at 243-257 (CGNCYLGDAFRCASC) is fe-S binding site B.

This sequence belongs to the anamorsin family. As to quaternary structure, monomer. Requires [2Fe-2S] cluster as cofactor. It depends on [4Fe-4S] cluster as a cofactor.

It is found in the cytoplasm. The protein localises to the mitochondrion intermembrane space. Its function is as follows. Component of the cytosolic iron-sulfur (Fe-S) protein assembly (CIA) machinery. Required for the maturation of extramitochondrial Fe-S proteins. Part of an electron transfer chain functioning in an early step of cytosolic Fe-S biogenesis, facilitating the de novo assembly of a [4Fe-4S] cluster on the cytosolic Fe-S scaffold complex. Electrons are transferred from NADPH via a FAD- and FMN-containing diflavin oxidoreductase. Together with the diflavin oxidoreductase, also required for the assembly of the diferric tyrosyl radical cofactor of ribonucleotide reductase (RNR), probably by providing electrons for reduction during radical cofactor maturation in the catalytic small subunit. The polypeptide is Anamorsin homolog (Monosiga brevicollis (Choanoflagellate)).